A 467-amino-acid chain; its full sequence is MMKKMTGKSFALSALVAASFMAAGAMASDKTEPRNEVYKDKFKNQYNSWHDTAKSEELVDALEQDPNMVILWAGYPFAKDYKAPRGHMYAVTDVRNTLRTGAPKDAEDGPLPMACWSCKSPDVPRLIEEQGEDGYFKGKWAKGGPEVTNAIGCGDCHDKGSPKLRISRPYVDRALDAIGTPFSKASKQDKESMVCAQCHVEYYFEKTEDKKGFVKFPWDMGVTVEKMEVYYDSIQFSDWTHALSKAPMLKAQHPEYETWKMGIHGMNNVSCVDCHMPKVTSADGKKFTDHKVGNPFDRFEETCATCHSQTKEFLVGVTNERKAKVKEMKLKAEEQLVKAHFEAEAAWKAGATEEEMKPILTDIRHSQWRWDLAIASHGVAAHAPDEALRILGTSVNKAADARVKLAQLLGKKGITDPVAVPDISTKAKAQAVLGMDMKQLVEEKEAFKKNILPKWDEEAKKREATYK.

The signal sequence occupies residues 1 to 27 (MMKKMTGKSFALSALVAASFMAAGAMA). H87 contacts heme c. Residues C115, C118, and K119 each coordinate heme. Residues C153, C156, H157, C195, C198, and H199 each coordinate heme c. Positions 201, 202, 250, and 252 each coordinate Ca(2+). A substrate-binding site is contributed by Y202. A substrate-binding site is contributed by H253. Residues H264, C271, C274, H275, H290, C303, C306, H307, and H382 each coordinate heme c.

The protein belongs to the cytochrome c-552 family. Ca(2+) is required as a cofactor. The cofactor is heme c.

It localises to the periplasm. It catalyses the reaction 6 Fe(III)-[cytochrome c] + NH4(+) + 2 H2O = 6 Fe(II)-[cytochrome c] + nitrite + 8 H(+). It participates in nitrogen metabolism; nitrate reduction (assimilation). Its function is as follows. Catalyzes the reduction of nitrite to ammonia, consuming six electrons in the process. In Shewanella sp. (strain W3-18-1), this protein is Cytochrome c-552.